The primary structure comprises 649 residues: Echinoderm microtubule-associated protein-like 2 (649 aa).

The segment at 10-649 (KEVIFSMEEG…DTSVLQWRVA (640 aa)) is tandem atypical propeller in EMLs. 12 WD repeats span residues 56–93 (KLDW…LYSV), 97–144 (RQRH…VWDS), 151–192 (HVLG…VWDW), 195–234 (ESKV…FWSL), 241–280 (KRQG…VWGK), 285–323 (ITQE…LWGS), 369–406 (FSLL…LWSS), 410–447 (QPVW…LLDT), 452–489 (LVAI…VYTV), 495–535 (KVSR…YWDP), 564–602 (FGIW…LFSY), and 609–648 (ALSH…QWRV). Residues 65–106 (GRDCRANLYLLPTGEVVYFVASVAVLYSVEEQRQRHYLGHND) adopt a coiled-coil conformation.

This sequence belongs to the WD repeat EMAP family. As to quaternary structure, interacts with GRID2 and may also interact with GRID1. Interacts with EML3. Binds unpolymerized tubulins via its WD repeat region.

Its subcellular location is the cytoplasm. It localises to the cytoskeleton. It is found in the spindle. In terms of biological role, tubulin binding protein that inhibits microtubule nucleation and growth, resulting in shorter microtubules. The protein is Echinoderm microtubule-associated protein-like 2 (Eml2) of Mus musculus (Mouse).